Reading from the N-terminus, the 226-residue chain is Putative ankyrin repeat protein RF_0939 (226 aa).

ANK repeat units follow at residues 56 to 86 (VSTT…NVNM), 91 to 120 (FKDT…AVNG), 125 to 154 (LLGP…AVDQ), and 157 to 194 (SGET…DTNA).

This chain is Putative ankyrin repeat protein RF_0939, found in Rickettsia felis (strain ATCC VR-1525 / URRWXCal2) (Rickettsia azadi).